A 606-amino-acid polypeptide reads, in one-letter code: MSADSRIAAITARIVERSKPYREPYLDRVRSAATNGPHRTVLGCGNLAHGFAVCSPAEKVALAGDRVPNLGIITSYNDMLSAHQPFETYPALIREAAHEAGGVAQVAGGVPAMCDGVTQGQPGMELSLFSRDVIAMAAGIGLSHNMFDAAVYLGVCDKIVPGLAIAALTFGHLPAVFIPAGPMTTGLPNDEKAKVRQLFAEGKVGRDELLEAESKSYHGPGTCTFYGTANSNQMLMEIMGFHLPGASFINPGTPLRDALTREATKRALAITALGNEFTPAGEMIDERSIVNGVVGLHATGGSTNHTMHLVAMARAAGIVLTWQDISELSDLVPLLARVYPNGLADVNHFHAAGGMGFLIAQLLRKGLLHDDVRTVYGQGLSAYAIDVKLGENGSVKREPAPEASADPKVLATVDRPFQHTGGLKMLSGNIGKAVIKISAVKPESHVIEAPAKIFNDQAELNAAFKAGKLEGDFVAVVRFQGPKANGMPELHKLTTVLGILQDRGQKVAILTDGRMSGASGKVPAAIHVTPEAKEGGPIARIQEGDIVRIDAINGKVEVLVEDIALKTRVPAHIDLSDNEFGMGRELFAPFRQIAGAADRGGSVLFH.

Cys156 and Cys223 together coordinate [4Fe-4S] cluster.

It belongs to the IlvD/Edd family. The cofactor is [4Fe-4S] cluster.

It catalyses the reaction 6-phospho-D-gluconate = 2-dehydro-3-deoxy-6-phospho-D-gluconate + H2O. Its pathway is carbohydrate metabolism; Entner-Doudoroff pathway. In terms of biological role, catalyzes the dehydration of 6-phospho-D-gluconate to 2-dehydro-3-deoxy-6-phospho-D-gluconate. This is Phosphogluconate dehydratase from Rhizobium meliloti (strain 1021) (Ensifer meliloti).